A 342-amino-acid polypeptide reads, in one-letter code: S-adenosylmethionine:tRNA ribosyltransferase-isomerase (342 aa).

Belongs to the QueA family. In terms of assembly, monomer.

The protein localises to the cytoplasm. It carries out the reaction 7-aminomethyl-7-carbaguanosine(34) in tRNA + S-adenosyl-L-methionine = epoxyqueuosine(34) in tRNA + adenine + L-methionine + 2 H(+). It participates in tRNA modification; tRNA-queuosine biosynthesis. Its function is as follows. Transfers and isomerizes the ribose moiety from AdoMet to the 7-aminomethyl group of 7-deazaguanine (preQ1-tRNA) to give epoxyqueuosine (oQ-tRNA). In Streptococcus pneumoniae (strain ATCC BAA-255 / R6), this protein is S-adenosylmethionine:tRNA ribosyltransferase-isomerase.